Reading from the N-terminus, the 768-residue chain is MHSDITPIHTHKKYWAECFGTAPFLPTSRKEMDALGWDSCDIVLVTGDAYVDHPSFGMAIIGRLLEAQGFRVGIIAQPQWQDKTDFMSLGKPNLFFGVTSGNMDSMINRYTSDRKLRHDDAYTPNNEGGKRPDRATLVYSQRCREAYKDVPIVLGGIEASLRRVAHYDYWSDKVRRSVLLDAKADILLFGNAERALVEVAHRLAEGEEIAQMTNIRGTAVNLAAEPEGYTIIDSSRIEKPRKEAFIPPNPYEVETQCETKSEEPKAQPITIRPSRHDAATTAVRLPSFEKLQNDRILYAHASRILHLETNPYSGRALIQRHGNRELWVNQAPIPLTTEEMDYVFGLPYARVPHPKYGKAKIPAYDMIKTSVNIMRGCFGGCSFCSITEHEGRIIQNRSQESILTELEEIRDKVPGFTGTISDLGGPTANMYRLGCSDPKAEANCRRPSCVFPGICNKLNTDHKHTIDLYRAARQVKGVKKVMIASGVRYDLAIESPEYVKELVTHHVGGYLKIAPEHTEKGPLDLMMKPGMGTYDRFKEMFDKYSQEAGKKQYLIPYFISAHPGTTDEDMLNLALWLKKNNYECDQVQNFYPSPMCNATSMYYSETNPLKRVKYKQREDVPVAKGDRQRRLHKALLRYHDPANWPLIREALITMGKKYLIGDKPGCLVPAEDMDARTPAQRRKSGRHGANRFATKHTSTQPGFPGDKANAGSGKKPTRGGQSNSAPSRSGSATGGKHPQRSGANTGGKSSGGKNSPRAGGRNQPSRAR.

A Radical SAM core domain is found at 363-640 (AYDMIKTSVN…LHKALLRYHD (278 aa)). Cysteine 377, cysteine 381, and cysteine 384 together coordinate [4Fe-4S] cluster. A disordered region spans residues 674-768 (DARTPAQRRK…GGRNQPSRAR (95 aa)). Basic residues predominate over residues 679-689 (AQRRKSGRHGA). Over residues 719 to 731 (GGQSNSAPSRSGS) the composition is skewed to polar residues.

The protein belongs to the UPF0313 family. The cofactor is [4Fe-4S] cluster.

This chain is UPF0313 protein VV1_2212, found in Vibrio vulnificus (strain CMCP6).